A 396-amino-acid chain; its full sequence is N-acetylglucosamine-6-phosphate deacetylase (396 aa).

Fe cation is bound by residues His63, His65, and Glu136. 147-148 (AQ) contacts substrate. Fe cation-binding residues include His202 and His223. Substrate-binding positions include 226 to 227 (NA), Arg234, and 255 to 258 (DGIH). Fe cation is bound at residue Asp281. Asp281 serves as the catalytic Proton donor. Substrate is bound at residue 314–316 (LAG).

It belongs to the metallo-dependent hydrolases superfamily. NagA family. In terms of assembly, homodimer. The cofactor is a divalent metal cation.

The catalysed reaction is N-acetyl-D-glucosamine 6-phosphate + H2O = D-glucosamine 6-phosphate + acetate. The protein operates within amino-sugar metabolism; N-acetylneuraminate degradation; D-fructose 6-phosphate from N-acetylneuraminate: step 4/5. Involved in the first committed step in the biosynthesis of amino-sugar-nucleotides. Catalyzes the hydrolysis of the N-acetyl group of N-acetylglucosamine-6-phosphate (GlcNAc-6-P) to yield glucosamine 6-phosphate and acetate. Essential for growth on N-acetylglucosamine. The sequence is that of N-acetylglucosamine-6-phosphate deacetylase (nagA) from Bacillus subtilis (strain 168).